Here is a 244-residue protein sequence, read N- to C-terminus: tRNA (guanine-N(1)-)-methyltransferase (244 aa).

S-adenosyl-L-methionine-binding positions include glycine 110 and isoleucine 129–leucine 134.

The protein belongs to the RNA methyltransferase TrmD family. In terms of assembly, homodimer.

Its subcellular location is the cytoplasm. It catalyses the reaction guanosine(37) in tRNA + S-adenosyl-L-methionine = N(1)-methylguanosine(37) in tRNA + S-adenosyl-L-homocysteine + H(+). Its function is as follows. Specifically methylates guanosine-37 in various tRNAs. The chain is tRNA (guanine-N(1)-)-methyltransferase from Syntrophomonas wolfei subsp. wolfei (strain DSM 2245B / Goettingen).